The following is a 259-amino-acid chain: GTP cyclohydrolase FolE2 (259 aa).

It belongs to the GTP cyclohydrolase IV family.

The catalysed reaction is GTP + H2O = 7,8-dihydroneopterin 3'-triphosphate + formate + H(+). Its pathway is cofactor biosynthesis; 7,8-dihydroneopterin triphosphate biosynthesis; 7,8-dihydroneopterin triphosphate from GTP: step 1/1. Converts GTP to 7,8-dihydroneopterin triphosphate. This is GTP cyclohydrolase FolE2 from Thermosipho melanesiensis (strain DSM 12029 / CIP 104789 / BI429).